The primary structure comprises 649 residues: Alpha-amylase (649 aa).

The active-site Nucleophile is the E124. D215 acts as the Proton donor in catalysis.

Belongs to the glycosyl hydrolase 57 family. Homodimer.

The enzyme catalyses Endohydrolysis of (1-&gt;4)-alpha-D-glucosidic linkages in polysaccharides containing three or more (1-&gt;4)-alpha-linked D-glucose units.. In terms of biological role, displays a broad range of substrate specificity, with the capacity to hydrolyze carbohydrates as simple as maltotriose. The chain is Alpha-amylase (amyA) from Pyrococcus furiosus (strain ATCC 43587 / DSM 3638 / JCM 8422 / Vc1).